The chain runs to 257 residues: Snake venom serine protease KN8 (257 aa).

Positions 1-18 (MVLIRVLANLLILQLSYA) are cleaved as a signal peptide. Residues 19–24 (QKSSEL) constitute a propeptide that is removed on maturation. The 224-residue stretch at 25–248 (VVGGLPCNIN…HLDWIKSIIA (224 aa)) folds into the Peptidase S1 domain. 5 disulfide bridges follow: Cys-31–Cys-162, Cys-49–Cys-65, Cys-141–Cys-209, Cys-173–Cys-188, and Cys-199–Cys-224. The Charge relay system role is filled by His-64. Asn-102 carries an N-linked (GlcNAc...) asparagine glycan. The active-site Charge relay system is Asp-109. 2 N-linked (GlcNAc...) asparagine glycosylation sites follow: Asn-120 and Asn-121. Ser-203 functions as the Charge relay system in the catalytic mechanism.

The protein belongs to the peptidase S1 family. Snake venom subfamily. In terms of assembly, monomer. As to expression, expressed by the venom gland.

It localises to the secreted. Its function is as follows. Snake venom serine protease that may act in the hemostasis system of the prey. The chain is Snake venom serine protease KN8 from Trimeresurus stejnegeri (Chinese green tree viper).